The sequence spans 505 residues: ATP synthase subunit alpha (505 aa).

Gly-171–Thr-178 provides a ligand contact to ATP.

Belongs to the ATPase alpha/beta chains family. As to quaternary structure, F-type ATPases have 2 components, CF(1) - the catalytic core - and CF(0) - the membrane proton channel. CF(1) has five subunits: alpha(3), beta(3), gamma(1), delta(1), epsilon(1). CF(0) has three main subunits: a(1), b(2) and c(9-12). The alpha and beta chains form an alternating ring which encloses part of the gamma chain. CF(1) is attached to CF(0) by a central stalk formed by the gamma and epsilon chains, while a peripheral stalk is formed by the delta and b chains.

It is found in the cell inner membrane. It carries out the reaction ATP + H2O + 4 H(+)(in) = ADP + phosphate + 5 H(+)(out). Produces ATP from ADP in the presence of a proton gradient across the membrane. The alpha chain is a regulatory subunit. The chain is ATP synthase subunit alpha from Campylobacter concisus (strain 13826).